Here is a 94-residue protein sequence, read N- to C-terminus: Small ribosomal subunit protein uS19 (94 aa).

Belongs to the universal ribosomal protein uS19 family.

Protein S19 forms a complex with S13 that binds strongly to the 16S ribosomal RNA. The protein is Small ribosomal subunit protein uS19 of Acetivibrio thermocellus (strain ATCC 27405 / DSM 1237 / JCM 9322 / NBRC 103400 / NCIMB 10682 / NRRL B-4536 / VPI 7372) (Clostridium thermocellum).